The sequence spans 217 residues: Ribonuclease HII (217 aa).

Residues 27–216 (SRIAGVDEAG…VKESIREGIC (190 aa)) form the RNase H type-2 domain. The a divalent metal cation site is built by D33, E34, and D126.

It belongs to the RNase HII family. The cofactor is Mn(2+). Requires Mg(2+) as cofactor.

It is found in the cytoplasm. It catalyses the reaction Endonucleolytic cleavage to 5'-phosphomonoester.. Functionally, endonuclease that specifically degrades the RNA of RNA-DNA hybrids. The polypeptide is Ribonuclease HII (rnhB) (Chlamydia muridarum (strain MoPn / Nigg)).